The primary structure comprises 154 residues: Large ribosomal subunit protein uL23y (154 aa).

The protein belongs to the universal ribosomal protein uL23 family.

Its function is as follows. Binds to a specific region on the 26S rRNA. In Arabidopsis thaliana (Mouse-ear cress), this protein is Large ribosomal subunit protein uL23y (RPL23AB).